The sequence spans 714 residues: Putative glutamine--fructose-6-phosphate aminotransferase [isomerizing] (714 aa).

The active-site Nucleophile; for GATase activity is Cys-2. Residues 2–321 (CGIFGYCNFL…DNDIAHIYDG (320 aa)) form the Glutamine amidotransferase type-2 domain. Residues 266-280 (STTSTFNHGSSTETP) are compositionally biased toward polar residues. The interval 266 to 285 (STTSTFNHGSSTETPAENGL) is disordered. SIS domains lie at 387–526 (WLTE…DLVS) and 559–704 (CDKK…VDLP).

It catalyses the reaction D-fructose 6-phosphate + L-glutamine = D-glucosamine 6-phosphate + L-glutamate. It functions in the pathway nucleotide-sugar biosynthesis; UDP-N-acetyl-alpha-D-glucosamine biosynthesis; alpha-D-glucosamine 6-phosphate from D-fructose 6-phosphate: step 1/1. Functionally, involved in amino sugar synthesis (formation of chitin, supplies the amino sugars of asparagine-linked oligosaccharides of glycoproteins). This Saccharomyces cerevisiae (strain YJM789) (Baker's yeast) protein is Putative glutamine--fructose-6-phosphate aminotransferase [isomerizing].